An 839-amino-acid polypeptide reads, in one-letter code: Probable E3 ubiquitin-protein ligase HUL4 (839 aa).

The 343-residue stretch at 497-839 (QQKDLKKSLR…LEESQGYGFR (343 aa)) folds into the HECT domain. Cysteine 807 acts as the Glycyl thioester intermediate in catalysis.

The protein belongs to the HUL4 family. As to quaternary structure, component of the TRAMP complex.

It is found in the nucleus. It carries out the reaction S-ubiquitinyl-[E2 ubiquitin-conjugating enzyme]-L-cysteine + [acceptor protein]-L-lysine = [E2 ubiquitin-conjugating enzyme]-L-cysteine + N(6)-ubiquitinyl-[acceptor protein]-L-lysine.. Probable E3 ubiquitin-protein ligase, component of the TRAMP complex which has a poly(A) RNA polymerase activity and is involved in a post-transcriptional quality control mechanism limiting inappropriate expression of genetic information. Polyadenylation is required for the degradative activity of the exosome on several of its nuclear RNA substrates. This chain is Probable E3 ubiquitin-protein ligase HUL4 (HUL4), found in Eremothecium gossypii (strain ATCC 10895 / CBS 109.51 / FGSC 9923 / NRRL Y-1056) (Yeast).